Reading from the N-terminus, the 338-residue chain is RNA 3'-terminal phosphate cyclase (338 aa).

ATP contacts are provided by residues Q103 and 283–287; that span reads YLADQ. Catalysis depends on H308, which acts as the Tele-AMP-histidine intermediate.

The protein belongs to the RNA 3'-terminal cyclase family. Type 1 subfamily.

It localises to the cytoplasm. The enzyme catalyses a 3'-end 3'-phospho-ribonucleotide-RNA + ATP = a 3'-end 2',3'-cyclophospho-ribonucleotide-RNA + AMP + diphosphate. Catalyzes the conversion of 3'-phosphate to a 2',3'-cyclic phosphodiester at the end of RNA. The mechanism of action of the enzyme occurs in 3 steps: (A) adenylation of the enzyme by ATP; (B) transfer of adenylate to an RNA-N3'P to produce RNA-N3'PP5'A; (C) and attack of the adjacent 2'-hydroxyl on the 3'-phosphorus in the diester linkage to produce the cyclic end product. The biological role of this enzyme is unknown but it is likely to function in some aspects of cellular RNA processing. The sequence is that of RNA 3'-terminal phosphate cyclase from Escherichia coli (strain K12 / MC4100 / BW2952).